Consider the following 425-residue polypeptide: Serine--tRNA ligase (425 aa).

Disordered regions lie at residues 43 to 69 (QRSS…SDPK) and 108 to 134 (LPNL…WGKP). Residues 117–134 (PEGRDENDNQERHRWGKP) are compositionally biased toward basic and acidic residues. 233–235 (TAE) lines the L-serine pocket. Position 264 to 266 (264 to 266 (RRE)) interacts with ATP. Glu-287 provides a ligand contact to L-serine. An ATP-binding site is contributed by 351–354 (EISS). L-serine is bound at residue Ser-385.

Belongs to the class-II aminoacyl-tRNA synthetase family. Type-1 seryl-tRNA synthetase subfamily. Homodimer. The tRNA molecule binds across the dimer.

The protein localises to the cytoplasm. It carries out the reaction tRNA(Ser) + L-serine + ATP = L-seryl-tRNA(Ser) + AMP + diphosphate + H(+). It catalyses the reaction tRNA(Sec) + L-serine + ATP = L-seryl-tRNA(Sec) + AMP + diphosphate + H(+). Its pathway is aminoacyl-tRNA biosynthesis; selenocysteinyl-tRNA(Sec) biosynthesis; L-seryl-tRNA(Sec) from L-serine and tRNA(Sec): step 1/1. Its function is as follows. Catalyzes the attachment of serine to tRNA(Ser). Is also able to aminoacylate tRNA(Sec) with serine, to form the misacylated tRNA L-seryl-tRNA(Sec), which will be further converted into selenocysteinyl-tRNA(Sec). In Prochlorococcus marinus (strain MIT 9313), this protein is Serine--tRNA ligase.